The chain runs to 116 residues: MRHRHAGKLLGRSYEHRKALYRNLMIALIEHKKIKTTLAKARAVQPEIEHLISIAREDTPHARRMALSKLASKNAMRKLFTFAPTTYGGRNGGYTRITKLGPRRGDGAEMALIELI.

Belongs to the bacterial ribosomal protein bL17 family. Part of the 50S ribosomal subunit. Contacts protein L32.

The polypeptide is Large ribosomal subunit protein bL17 (Chloroflexus aggregans (strain MD-66 / DSM 9485)).